A 117-amino-acid chain; its full sequence is uncharacterized protein (117 aa).

Residues 10–32 traverse the membrane as a helical segment; it reads VCYLGDIAASGFLNSIATALIAV.

It is found in the membrane. This is an uncharacterized protein from Rickettsia conorii (strain ATCC VR-613 / Malish 7).